Here is a 182-residue protein sequence, read N- to C-terminus: Ribosome-recycling factor (182 aa).

This sequence belongs to the RRF family.

It localises to the cytoplasm. Its function is as follows. Responsible for the release of ribosomes from messenger RNA at the termination of protein biosynthesis. May increase the efficiency of translation by recycling ribosomes from one round of translation to another. This is Ribosome-recycling factor from Gloeothece citriformis (strain PCC 7424) (Cyanothece sp. (strain PCC 7424)).